The primary structure comprises 210 residues: Large ribosomal subunit protein bL25 (210 aa).

The protein belongs to the bacterial ribosomal protein bL25 family. CTC subfamily. As to quaternary structure, part of the 50S ribosomal subunit; part of the 5S rRNA/L5/L18/L25 subcomplex. Contacts the 5S rRNA. Binds to the 5S rRNA independently of L5 and L18.

Its function is as follows. This is one of the proteins that binds to the 5S RNA in the ribosome where it forms part of the central protuberance. In Saccharophagus degradans (strain 2-40 / ATCC 43961 / DSM 17024), this protein is Large ribosomal subunit protein bL25.